Consider the following 638-residue polypeptide: Growth hormone receptor (638 aa).

Residues 1–18 (MDLWQLLLTLALAGSSDA) form the signal peptide. Residues 19–264 (FSGSEPTAAI…NQFTCEEDFY (246 aa)) lie on the Extracellular side of the membrane. The N-linked (GlcNAc...) asparagine glycan is linked to Asn46. Disulfide bonds link Cys56/Cys66 and Cys101/Cys112. N-linked (GlcNAc...) asparagine glycosylation is present at Asn115. Cys126 and Cys140 are oxidised to a cystine. The region spanning 151–254 (PPIALNWTLL…EVLYVTLPQM (104 aa)) is the Fibronectin type-III domain. Asn156, Asn161, and Asn200 each carry an N-linked (GlcNAc...) asparagine glycan. The short motif at 240 to 244 (YGEFS) is the WSXWS motif element. The chain crosses the membrane as a helical span at residues 265–288 (FPWLLIIIFGIFGLTVMLFVFLFS). Topologically, residues 289–638 (KQQRIKMLIL…STDQLNKIMP (350 aa)) are cytoplasmic. Residues 294-379 (KMLILPPVPV…HQKSHSNLGV (86 aa)) form a required for JAK2 binding region. The Box 1 motif motif lies at 297-305 (ILPPVPVPK). The short motif at 340 to 349 (DSWVEFIELD) is the UbE motif element. The residue at position 341 (Ser341) is a Phosphoserine. The tract at residues 353–388 (PDEKNEGSDTDRLLSSDHQKSHSNLGVKDGDSGRTS) is disordered. Residues 356-372 (KNEGSDTDRLLSSDHQK) show a composition bias toward basic and acidic residues. Phosphotyrosine is present on residues Tyr487 and Tyr595.

The protein belongs to the type I cytokine receptor family. Type 1 subfamily. As to quaternary structure, on growth hormone (GH) binding, forms homodimers and binds JAK2 via a box 1-containing domain. The soluble form (GHBP) is produced by phorbol ester-promoted proteolytic cleavage at the cell surface (shedding) by ADAM17/TACE. Shedding is inhibited by growth hormone (GH) binding to the receptor probably due to a conformational change in GHR rendering the receptor inaccessible to ADAM17. In terms of processing, on GH binding, phosphorylated on tyrosine residues in the cytoplasmic domain by JAK2. Post-translationally, ubiquitinated by the ECS(SOCS2) complex following ligand-binding and phosphorylation by JAK2, leading to its degradation by the proteasome. Regulation by the ECS(SOCS2) complex acts as a negative feedback loop of growth hormone receptor signaling. Ubiquitination is not sufficient for GHR internalization.

It localises to the cell membrane. The protein localises to the secreted. Receptor for pituitary gland growth hormone (GH1) involved in regulating postnatal body growth. On ligand binding, couples to the JAK2/STAT5 pathway. In terms of biological role, the soluble form (GHBP) acts as a reservoir of growth hormone in plasma and may be a modulator/inhibitor of GH signaling. This chain is Growth hormone receptor (GHR), found in Macaca mulatta (Rhesus macaque).